The primary structure comprises 431 residues: Enolase (431 aa).

Gln-162 contributes to the (2R)-2-phosphoglycerate binding site. The Proton donor role is filled by Glu-204. Asp-241, Glu-288, and Asp-315 together coordinate Mg(2+). (2R)-2-phosphoglycerate-binding residues include Lys-340, Arg-369, Ser-370, and Lys-391. Lys-340 (proton acceptor) is an active-site residue.

Belongs to the enolase family. Mg(2+) is required as a cofactor.

The protein localises to the cytoplasm. Its subcellular location is the secreted. It is found in the cell surface. The catalysed reaction is (2R)-2-phosphoglycerate = phosphoenolpyruvate + H2O. It participates in carbohydrate degradation; glycolysis; pyruvate from D-glyceraldehyde 3-phosphate: step 4/5. Functionally, catalyzes the reversible conversion of 2-phosphoglycerate (2-PG) into phosphoenolpyruvate (PEP). It is essential for the degradation of carbohydrates via glycolysis. The protein is Enolase of Phocaeicola vulgatus (strain ATCC 8482 / DSM 1447 / JCM 5826 / CCUG 4940 / NBRC 14291 / NCTC 11154) (Bacteroides vulgatus).